The sequence spans 186 residues: Zinc finger AN1 domain-containing stress-associated protein 12 (186 aa).

2 consecutive AN1-type zinc fingers follow at residues 10 to 58 (PDLG…HGSR) and 97 to 147 (KKKK…INTA). Zn(2+) contacts are provided by Cys16, Cys21, Cys31, Cys34, Cys39, His42, His48, Cys50, Cys103, Cys108, Cys120, Cys123, Cys128, His131, His137, and Cys139. Residues 167-186 (KGCGRGSSVSSKSSPSVRSF) are disordered. Over residues 172–186 (GSSVSSKSSPSVRSF) the composition is skewed to low complexity.

Functionally, may be involved in environmental stress response. The protein is Zinc finger AN1 domain-containing stress-associated protein 12 (SAP12) of Arabidopsis thaliana (Mouse-ear cress).